The sequence spans 364 residues: Natterin-3 (364 aa).

The N-terminal stretch at 1–18 (MKLSVLVVTLLAVSWTSA) is a signal peptide. Residues 19-42 (QPETFSIQTKEANMNPEPANIRVA) constitute a propeptide that is removed on maturation.

The protein belongs to the natterin family. Contains 4 disulfide bonds. In terms of tissue distribution, expressed by the venom gland.

The protein localises to the secreted. Inhibited by tissue-kallikrein inhibitor TKI and trasylol. Plasma kallikrein inhibitor PKSI527 and classical inhibitors of serine-, metallo-, thiol- or aspartate-peptidases evokes a minor inhibition of the peptide digestion. In terms of biological role, shows nociceptive, edema-inducing and kininogenase activity with release of kallidin from low molecular weight kininogen. The cleavage occurs at Met-Lys bonds. The protein is Natterin-3 of Thalassophryne nattereri (Copper Joe toadfish).